Reading from the N-terminus, the 114-residue chain is uncharacterized protein (114 aa).

This is an uncharacterized protein from Acanthamoeba polyphaga mimivirus (APMV).